Reading from the N-terminus, the 285-residue chain is Nucleotide-binding protein PFL_0912 (285 aa).

8 to 15 (GRSGSGKS) contacts ATP. A GTP-binding site is contributed by 60 to 63 (DARN).

Belongs to the RapZ-like family.

Functionally, displays ATPase and GTPase activities. The protein is Nucleotide-binding protein PFL_0912 of Pseudomonas fluorescens (strain ATCC BAA-477 / NRRL B-23932 / Pf-5).